Reading from the N-terminus, the 234-residue chain is Acetylxylan esterase 2 (234 aa).

An N-terminal signal peptide occupies residues 1–17 (MHSKFFAASLLGLGAAA). A propeptide spanning residues 18 to 27 (IPLEGVMEKR) is cleaved from the precursor. Intrachain disulfides connect C29-C106 and C73-C79. The active site involves S117. Disulfide bonds link C128–C188, C174–C206, and C198–C205. The active site involves D202. An N-linked (GlcNAc...) asparagine glycan is attached at N207. Residue H214 is part of the active site.

Belongs to the cutinase family. Acetylxylan esterase subfamily. As to quaternary structure, monomer.

It is found in the secreted. It catalyses the reaction Deacetylation of xylans and xylo-oligosaccharides.. Its pathway is glycan degradation; xylan degradation. Its function is as follows. Degrades acetylated xylans by cleaving acetyl side groups from the hetero-xylan backbone. The chain is Acetylxylan esterase 2 (axe-2) from Talaromyces purpureogenus (Soft rot fungus).